Reading from the N-terminus, the 303-residue chain is Ornithine carbamoyltransferase (303 aa).

Residues 52-55 (STRT), glutamine 79, arginine 103, and 130-133 (HPCQ) each bind carbamoyl phosphate. L-ornithine contacts are provided by residues asparagine 161, aspartate 222, and 226 to 227 (SM). Carbamoyl phosphate-binding positions include 262-263 (CL) and arginine 290.

The protein belongs to the aspartate/ornithine carbamoyltransferase superfamily. OTCase family.

It is found in the cytoplasm. It carries out the reaction carbamoyl phosphate + L-ornithine = L-citrulline + phosphate + H(+). Its pathway is amino-acid biosynthesis; L-arginine biosynthesis; L-arginine from L-ornithine and carbamoyl phosphate: step 1/3. Its function is as follows. Reversibly catalyzes the transfer of the carbamoyl group from carbamoyl phosphate (CP) to the N(epsilon) atom of ornithine (ORN) to produce L-citrulline. The protein is Ornithine carbamoyltransferase of Geobacter metallireducens (strain ATCC 53774 / DSM 7210 / GS-15).